The primary structure comprises 549 residues: MPDAFDVSDDKQLVDQQLTRDSDSKPAAKPASKQKPPSKVPGVLAADPVPEPGAAPVQAREQGHAPQGNRKPAVLEPAYHESRVVRLARYVASWTGPVNPLPAIDVLRWATNLMQSFIDARAAAGGVPVFRMHIGLPVVVITDHASAKFFLGSPSSDLDREDFKRFGPLGVAPSLLKNAMPSLVASDATGHKVDRALTVAVMHSRFKHVDEALRQSQQIVYDDFMPGVFRHPDQYTIRDVAYKFVGQFMFKWLLNTTPPSLKALRGYPVDCIIDLQTSNWLGTLVGSALCKLKMAATHSSTLNAEGLDIVRHSRLYETYRKMAETMGYTTADLDLWLQFLVQFNGVAGIGLTLASAIAVLSEQLSTLDELRREVGDEPLRFDTVDGKFPLLDSFAYEWMRFFMGPRVIFKKAMKDLQVPTSDGNLYKVRKDELICAALPLCQRDGTVYDAPNRFNARRFLDNPSLKWQVFNFGFVEAEHNPKPVQTARFGCALYSAGVGLALFKVLIGTWIQRIDWECDQEFTFVGNDTGDHGPPNGKFSVIKPRQPKH.

The disordered stretch occupies residues 1-75 (MPDAFDVSDD…PQGNRKPAVL (75 aa)). Residues 8–26 (SDDKQLVDQQLTRDSDSKP) are compositionally biased toward basic and acidic residues. Residues 27 to 41 (AAKPASKQKPPSKVP) are compositionally biased toward low complexity. Heme is bound at residue C491. The segment at 528–549 (DTGDHGPPNGKFSVIKPRQPKH) is disordered.

It belongs to the cytochrome P450 family. Heme is required as a cofactor.

Its subcellular location is the mitochondrion. The catalysed reaction is (13S)-hydroperoxy-(9Z,11E,15Z)-octadecatrienoate = plasmodiophorol A. It catalyses the reaction (13S)-hydroperoxy-(9Z,11E,15Z)-octadecatrienoate = plasmodiophorol B. It functions in the pathway lipid metabolism; oxylipin biosynthesis. In terms of biological role, cytochrome P450 hydroperoxide bicyclase involved in the metabolism of oxylipins natural products such as egregiachlorides, hybridalactone, ecklonialactones and related bicyclic oxylipins. Isomerizes the hydroperoxides into epoxyalcohols via epoxyallylic radical. Can use alpha-linolenic 13-hydroperoxide ((9Z,11E,13S,15Z)-13-hydroperoxy-9,11,15-octadecatrienoic, 13-HPOT) as preferred substrate to produce the heterobicyclic oxylipins plasmodiophorol A (6-oxabicyclo[3.1.0]hexane) and plasmodiophorol B (2-oxabicyclo[2.2.1]heptane) at the ratio 12:1 and a minor product plasmodiophorol C (cyclopentanediol) formed through the hydrolysis of plasmodiophorols A and B and, to a lower extent, active with linoleic acid 13-hydroperoxide ((9Z,11E,13S)-13-hydroperoxy-9,11-octadecadienoic, 13-HPOD), linoleic acid 9-hydroperoxide ((9S,10E,12Z)-9-hydroperoxy-10,12-octadecadienoic, 9-HPOD) and alpha-linolenic 9-hydroperoxide ((9S,10E,12Z,15Z)-9-hydroperoxy-10,12,15-octadecatrienoic, 9-HPOT). In Plasmodiophora brassicae (Clubroot disease agent), this protein is Mitochondrial hydroperoxide bicyclase CYP50918A1.